Reading from the N-terminus, the 934-residue chain is Complement component C6 (934 aa).

The signal sequence occupies residues 1-21; it reads MARRSVLYFILLNALINKGQA. Disulfide bonds link cysteine 22/cysteine 61, cysteine 24/cysteine 65, cysteine 35/cysteine 73, cysteine 39/cysteine 78, cysteine 82/cysteine 117, cysteine 93/cysteine 127, cysteine 96/cysteine 133, cysteine 140/cysteine 151, cysteine 146/cysteine 164, cysteine 158/cysteine 173, and cysteine 180/cysteine 218. TSP type-1 domains are found at residues 22–79 and 81–134; these read CFCD…QRCP and NCLL…KLCK. Tryptophan 29 carries a C-linked (Man) tryptophan glycan. C-linked (Man) tryptophan; partial glycosylation occurs at tryptophan 32. O-linked (Fuc...) threonine glycosylation occurs at threonine 38. Tryptophan 90 carries a C-linked (Man) tryptophan; partial glycan. The region spanning 138-175 is the LDL-receptor class A domain; the sequence is ADCKNKFRCDSGRCIARKLECNGENDCGDNSDERDCGR. Residues leucine 156, asparagine 159, glutamate 161, aspartate 163, aspartate 169, and glutamate 170 each contribute to the Ca(2+) site. Residues 176-522 enclose the MACPF domain; that stretch reads TKAVCTRKYN…EYAAKFDPCQ (347 aa). Residues 278–290 traverse the membrane as a beta stranded segment; it reads SFSVPIFYSSKRS. N-linked (GlcNAc...) asparagine glycosylation occurs at asparagine 324. O-linked (Fuc...) threonine glycosylation is present at threonine 392. Cystine bridges form between cysteine 399–cysteine 420, cysteine 499–cysteine 623, cysteine 521–cysteine 570, cysteine 523–cysteine 539, cysteine 526–cysteine 541, cysteine 543–cysteine 552, cysteine 577–cysteine 611, cysteine 589–cysteine 601, cysteine 644–cysteine 686, cysteine 672–cysteine 699, cysteine 704–cysteine 746, cysteine 732–cysteine 761, cysteine 773–cysteine 823, cysteine 784–cysteine 801, cysteine 786–cysteine 837, and cysteine 793–cysteine 816. Residues 402-415 traverse the membrane as a beta stranded segment; it reads IETKKRVLFAKKTK. One can recognise an EGF-like domain in the interval 523-553; that stretch reads CAPCPNNGRPTLSGTECLCVCQSGTYGENCE. The region spanning 565–612 is the TSP type-1 3 domain; sequence DGQWGCWSSWSTCDATYKRSRTRECNNPAPQRGGKRCEGEKRQEEDCT. C-linked (Man) tryptophan; partial glycosylation is found at tryptophan 568, tryptophan 571, and tryptophan 574. CCP regions lie at residues 611–688 and 689–765; these read CTFS…RCLP and DGTW…EKDT. Sushi domains are found at residues 642–701 and 702–763; these read SGCP…ECQR and TECI…TCEK. The interval 642-934 is C5b-binding domain; sequence SGCPQPVPPE…EILHPGKCLA (293 aa). The segment at 766–840 is factor I module (FIM) 1; sequence LTKLKGHCQL…FLHIGSCQDG (75 aa). The Kazal-like 1 domain occupies 780–839; that stretch reads SGSECICMSPEEDCSHHSEDLCVFDTDSNDYFTSPACKFLAEKCLNNQQLHFLHIGSCQD. Residue asparagine 855 is glycosylated (N-linked (GlcNAc...) asparagine). The tract at residues 858–934 is factor I module (FIM) 2; the sequence is KKESCGYDTC…EILHPGKCLA (77 aa). Disulfide bonds link cysteine 862-cysteine 873, cysteine 867-cysteine 919, cysteine 880-cysteine 897, cysteine 882-cysteine 932, and cysteine 888-cysteine 912. Residues 876 to 934 enclose the Kazal-like 2 domain; it reads STSKCVCLLPPQCFKGGNQLYCVKMGSSTSEKTLNICEVGTIRCANRKMEILHPGKCLA.

It belongs to the complement C6/C7/C8/C9 family. In terms of assembly, component of the membrane attack complex (MAC), composed of complement C5b, C6, C7, C8A, C8B, C8G and multiple copies of the pore-forming subunit C9. In terms of processing, all cysteine residues are assumed to be cross-linked to one another. Individual modules containing an even number of conserved cysteine residues are supposed to have disulfide linkages only within the same module.

The protein resides in the secreted. It localises to the target cell membrane. With respect to regulation, membrane attack complex (MAC) assembly is inhibited by CD59, thereby protecting self-cells from damage during complement activation. MAC assembly is also inhibited by clusterin (CLU) chaperones that inhibit polymerization of C9. Component of the membrane attack complex (MAC), a multiprotein complex activated by the complement cascade, which inserts into a target cell membrane and forms a pore, leading to target cell membrane rupture and cell lysis. The MAC is initiated by proteolytic cleavage of C5 into complement C5b in response to the classical, alternative, lectin and GZMK complement pathways. The complement pathways consist in a cascade of proteins that leads to phagocytosis and breakdown of pathogens and signaling that strengthens the adaptive immune system. Together with component C5b, involved in MAC complex assembly: complement C5b and C6 associate with the outer leaflet of target cell membrane, reducing the energy for membrane bending. This is Complement component C6 from Homo sapiens (Human).